The sequence spans 185 residues: Elongation factor P (185 aa).

Belongs to the elongation factor P family.

The protein localises to the cytoplasm. Its pathway is protein biosynthesis; polypeptide chain elongation. Involved in peptide bond synthesis. Stimulates efficient translation and peptide-bond synthesis on native or reconstituted 70S ribosomes in vitro. Probably functions indirectly by altering the affinity of the ribosome for aminoacyl-tRNA, thus increasing their reactivity as acceptors for peptidyl transferase. The protein is Elongation factor P of Desulfovibrio desulfuricans (strain ATCC 27774 / DSM 6949 / MB).